Reading from the N-terminus, the 282-residue chain is Malonyl-[acyl-carrier protein] O-methyltransferase 1 (282 aa).

This sequence belongs to the methyltransferase superfamily.

It catalyses the reaction malonyl-[ACP] + S-adenosyl-L-methionine = malonyl-[ACP] methyl ester + S-adenosyl-L-homocysteine. It participates in cofactor biosynthesis; biotin biosynthesis. Functionally, converts the free carboxyl group of a malonyl-thioester to its methyl ester by transfer of a methyl group from S-adenosyl-L-methionine (SAM). It allows to synthesize pimeloyl-ACP via the fatty acid synthetic pathway. The polypeptide is Malonyl-[acyl-carrier protein] O-methyltransferase 1 (Coxiella burnetii (strain RSA 493 / Nine Mile phase I)).